The following is a 33-amino-acid chain: uncharacterized protein (33 aa).

Residues 1–12 (MKENKVQQISHK) are Cytoplasmic-facing. The helical transmembrane segment at 13–33 (LINIVVFVAIVEYAYLFLHFY) threads the bilayer.

The protein localises to the cell inner membrane. This is an uncharacterized protein from Escherichia coli (strain K12).